A 389-amino-acid chain; its full sequence is Chalcone synthase 3 (389 aa).

Residue cysteine 164 is part of the active site.

The protein belongs to the thiolase-like superfamily. Chalcone/stilbene synthases family.

It carries out the reaction (E)-4-coumaroyl-CoA + 3 malonyl-CoA + 3 H(+) = 2',4,4',6'-tetrahydroxychalcone + 3 CO2 + 4 CoA. Its pathway is secondary metabolite biosynthesis; flavonoid biosynthesis. Functionally, the primary product of this enzyme is 4,2',4',6'-tetrahydroxychalcone (also termed naringenin-chalcone or chalcone) which can under specific conditions spontaneously isomerize into naringenin. This is Chalcone synthase 3 (CHS3) from Camellia sinensis (Tea plant).